A 743-amino-acid polypeptide reads, in one-letter code: POU domain, class 2, transcription factor 1 (743 aa).

Polar residues predominate over residues 1–11 (MNNPSETSKPS). Disordered regions lie at residues 1-34 (MNNP…QPVP), 67-95 (SLNV…SVQA), 258-283 (ATPI…EEPS), and 357-381 (SSDS…RRRK). Over residues 81 to 95 (SQQPSQPSQQPSVQA) the composition is skewed to low complexity. Residues T270 and T276 each carry the phosphothreonine modification. In terms of domain architecture, POU-specific spans 280-354 (EEPSDLEELE…LLEKWLNDAE (75 aa)). Position 283 is a phosphoserine (S283). Positions 357–371 (SSDSSLSSPSALNSP) are enriched in low complexity. Residues 379–438 (RRKKRTSIETNIRVALEKSFLENQKPTSEEITMIADQLNMEKEVIRVWFCNRRQKEKRIN) constitute a DNA-binding region (homeobox). Phosphoserine is present on residues S385 and S448. A compositionally biased stretch (polar residues) spans 494-504 (VTGTSDTTSNN). A disordered region spans residues 494-557 (VTGTSDTTSN…TTSTPLSSPL (64 aa)). The span at 505–557 (TATVISTAPPASSAVTSPSLSPSPSASASTSEASSASETSTTQTTSTPLSSPL) shows a compositional bias: low complexity.

The protein belongs to the POU transcription factor family. Class-2 subfamily. Interacts with POU2AF1; the interaction increases POU2F1 transactivation activity. Interacts with NR3C1, AR, PGR and HCFC1. In terms of assembly, (Microbial infection) Associates with the herpes simplex virus VP16-induced complex; binding to HCFC1 activates the viral transcriptional activator VP16 for association with POU2F1, to form a multiprotein-DNA complex responsible for activating transcription of the viral immediate early genes. As to quaternary structure, (Microbial infection) Interacts with human herpesvirus 8 (KSHV) protein RTA/ORF50; this interaction enhances RTA/ORF50-mediated transactivation of several viral promoters including K-bZIP promoter. Phosphorylated by PRKDC. Ubiquitous. Isoform 2 is lymphocyte-specific.

The protein localises to the nucleus. Transcription factor that binds to the octamer motif (5'-ATTTGCAT-3') and activates the promoters of the genes for some small nuclear RNAs (snRNA) and of genes such as those for histone H2B and immunoglobulins. Modulates transcription transactivation by NR3C1, AR and PGR. In terms of biological role, (Microbial infection) In case of human herpes simplex virus (HSV) infection, POU2F1 forms a multiprotein-DNA complex with the viral transactivator protein VP16 and HCFC1 thereby enabling the transcription of the viral immediate early genes. The polypeptide is POU domain, class 2, transcription factor 1 (POU2F1) (Homo sapiens (Human)).